Reading from the N-terminus, the 151-residue chain is Flagellar assembly factor FliW (151 aa).

Belongs to the FliW family. In terms of assembly, interacts with translational regulator CsrA and flagellin(s).

Its subcellular location is the cytoplasm. Acts as an anti-CsrA protein, binds CsrA and prevents it from repressing translation of its target genes, one of which is flagellin. Binds to flagellin and participates in the assembly of the flagellum. The sequence is that of Flagellar assembly factor FliW from Lachnospira eligens (strain ATCC 27750 / DSM 3376 / VPI C15-48 / C15-B4) (Eubacterium eligens).